The sequence spans 444 residues: UDP-N-acetylmuramate--L-alanine ligase (444 aa).

Residue 110 to 116 participates in ATP binding; sequence GAHGKTS.

It belongs to the MurCDEF family. Phosphorylated by StkP in vitro. Dephosphorylated by PhpP in vitro.

The protein resides in the cytoplasm. It catalyses the reaction UDP-N-acetyl-alpha-D-muramate + L-alanine + ATP = UDP-N-acetyl-alpha-D-muramoyl-L-alanine + ADP + phosphate + H(+). It participates in cell wall biogenesis; peptidoglycan biosynthesis. Its function is as follows. Cell wall formation. This Streptococcus pneumoniae serotype 4 (strain ATCC BAA-334 / TIGR4) protein is UDP-N-acetylmuramate--L-alanine ligase.